We begin with the raw amino-acid sequence, 185 residues long: NADH-quinone oxidoreductase subunit B (185 aa).

Positions 38, 39, 104, and 133 each coordinate [4Fe-4S] cluster. Over residues 165–176 (AAEAYREEERQA) the composition is skewed to basic and acidic residues. The tract at residues 165-185 (AAEAYREEERQAARSALGPRS) is disordered.

The protein belongs to the complex I 20 kDa subunit family. As to quaternary structure, NDH-1 is composed of 14 different subunits. Subunits NuoB, C, D, E, F, and G constitute the peripheral sector of the complex. [4Fe-4S] cluster is required as a cofactor.

The protein resides in the cell membrane. It carries out the reaction a quinone + NADH + 5 H(+)(in) = a quinol + NAD(+) + 4 H(+)(out). In terms of biological role, NDH-1 shuttles electrons from NADH, via FMN and iron-sulfur (Fe-S) centers, to quinones in the respiratory chain. The immediate electron acceptor for the enzyme in this species is believed to be ubiquinone. Couples the redox reaction to proton translocation (for every two electrons transferred, four hydrogen ions are translocated across the cytoplasmic membrane), and thus conserves the redox energy in a proton gradient. In Thermomicrobium roseum (strain ATCC 27502 / DSM 5159 / P-2), this protein is NADH-quinone oxidoreductase subunit B.